The following is a 177-amino-acid chain: Probable phospholipid hydroperoxide glutathione peroxidase (177 aa).

The active site involves Cys42.

It belongs to the glutathione peroxidase family.

Its subcellular location is the cytoplasm. The enzyme catalyses a hydroperoxy polyunsaturated fatty acid + 2 glutathione = a hydroxy polyunsaturated fatty acid + glutathione disulfide + H2O. Functionally, protects cells and enzymes from oxidative damage, by catalyzing the reduction of hydrogen peroxide, lipid peroxides and organic hydroperoxide, by glutathione. This chain is Probable phospholipid hydroperoxide glutathione peroxidase, found in Encephalitozoon cuniculi (strain GB-M1) (Microsporidian parasite).